Reading from the N-terminus, the 500-residue chain is L-aspartate semialdehyde sulfurtransferase (500 aa).

Cys131 acts as the Cysteine persulfide intermediate in catalysis. CBS domains are found at residues Met384–Ser441 and Met446–Tyr500.

This sequence belongs to the L-aspartate semialdehyde sulfurtransferase family. As to quaternary structure, forms homodimers. May form a complex with MA_1822.

It carries out the reaction L-aspartate 4-semialdehyde + reduced 2[4Fe-4S]-[ferredoxin] + hydrogen sulfide + 3 H(+) = oxidized 2[4Fe-4S]-[ferredoxin] + L-homocysteine + H2O. It participates in amino-acid biosynthesis. Functionally, required for O-acetylhomoserine sulfhydrylase (OAHS)-independent homocysteine (Hcy) biosynthesis. Together with MA_1822, catalyzes the condensation of sulfide with aspartate semialdehyde to generate homocysteine. Likely functions through persulfide intermediate. In Methanosarcina acetivorans (strain ATCC 35395 / DSM 2834 / JCM 12185 / C2A), this protein is L-aspartate semialdehyde sulfurtransferase.